The chain runs to 112 residues: MDLMPLEKARAIEIAFDNVFHNTKIPDNLQQFDAILKRLERRRFIPTENQKPRVYETELLVLRFREFGVKDNHNHPINLHSLRSKSLIRAQGKKLDLHNRVFLRRNVRAVKM.

In terms of assembly, component of the CENP-A recruiting complex composed of at least mis16, mis19, mis19 and mis20.

It localises to the chromosome. Its subcellular location is the centromere. It is found in the kinetochore. In terms of biological role, component of the CENP-A recruiting complex that ensures the integrity of mitotic spindles through maintenance of kinetochore factors mis6/CENP-I and cnp1/CENP-A. Links mis16 and mis18 to recruit CENP-A through interacting with non-sense-mediated mRNA decay (NMD) factors and the SWI/SNF complex. Also links mis18 with the CCAN/mis6/ctf19 complex to promote CENP-A assembly. This Schizosaccharomyces pombe (strain 972 / ATCC 24843) (Fission yeast) protein is CENP-A recruiting complex protein mis19.